A 764-amino-acid polypeptide reads, in one-letter code: Nucleolar complex-associated protein 2 (764 aa).

A coiled-coil region spans residues 3–69 (AKDDKKRVKK…EEELKRLQEK (67 aa)). Disordered regions lie at residues 23 to 67 (ELNN…KRLQ), 89 to 113 (ATEI…EGDD), 627 to 646 (AVFG…DRME), and 651 to 726 (AFNS…EDDA). Over residues 30–41 (IDAHDIVMEQKS) the composition is skewed to basic and acidic residues. Residues 42–51 (DKKRGKKVKS) show a composition bias toward basic residues. Residues 52-67 (KKAEAEEHEEELKRLQ) show a composition bias toward basic and acidic residues. Positions 90 to 113 (TEIEDDADVEPDTDLEDTEKEGDD) are enriched in acidic residues. The span at 661–672 (DSKEKEPEEEKT) shows a compositional bias: basic and acidic residues. The short motif at 673-680 (KKKKRKRG) is the Nuclear localization signal 1 element. A compositionally biased stretch (basic residues) spans 673–682 (KKKKRKRGGK). The span at 693-726 (GLGEDDVVEDFVLSSDEEEEDLFDIGGDKDEDDA) shows a compositional bias: acidic residues. Positions 738 to 745 (SKKTKGTY) match the Nuclear localization signal 2 motif.

This sequence belongs to the NOC2 family. In terms of assembly, component of nucleolar complexes. Forms homodimers. Interacts with RBL and NOC3 in both the nucleolus and nucleoplasm. Binds to SWA2.

It localises to the nucleus. The protein localises to the nucleolus. It is found in the nucleoplasm. Its function is as follows. Together with SWA2, probably involved in pre-ribosome export from the nucleus to the cytoplasm. The chain is Nucleolar complex-associated protein 2 from Arabidopsis thaliana (Mouse-ear cress).